The chain runs to 104 residues: Flagellar hook-basal body complex protein FliE (104 aa).

It belongs to the FliE family.

Its subcellular location is the bacterial flagellum basal body. This chain is Flagellar hook-basal body complex protein FliE, found in Pectobacterium carotovorum subsp. carotovorum (strain PC1).